The following is a 46-amino-acid chain: Photosystem II reaction center protein Psb30 (46 aa).

Residue M1 is modified to N-formylmethionine. Over 1-20 (MGIFNGIIEFLSNINFEVIA) the chain is Lumenal. The helical transmembrane segment at 21–38 (QLTMIAMIGIAGPMIIFL) threads the bilayer. Residues 39 to 46 (LAVRRGNL) are Cytoplasmic-facing.

This sequence belongs to the Psb30/Ycf12 family. PSII is composed of 1 copy each of membrane proteins PsbA, PsbB, PsbC, PsbD, PsbE, PsbF, PsbH, PsbI, PsbJ, PsbK, PsbL, PsbM, PsbT, PsbX, PsbY, PsbZ, Psb30/Ycf12, peripheral proteins PsbO, CyanoQ (PsbQ), PsbU, PsbV and a large number of cofactors. It forms dimeric complexes. Part of a photosystem II (PSII) assembly intermediate complex PSII-I; crystallized from a strain deleted of psbJ, it forms monomeric PSII before addition of the oxygen evolving complex. PSII-I includes 3 assembly factors not found in mature PSII (Psb27, Psb28 and Psb34). PSII binds multiple chlorophylls, carotenoids and specific lipids. serves as cofactor.

The protein localises to the cellular thylakoid membrane. Functionally, a core subunit of photosystem II (PSII). PSII is a light-driven water plastoquinone oxidoreductase, using light energy to abstract electrons from H(2)O, generating a proton gradient subsequently used for ATP formation. Helps stabilize PSII. In Thermosynechococcus vestitus (strain NIES-2133 / IAM M-273 / BP-1), this protein is Photosystem II reaction center protein Psb30.